A 378-amino-acid polypeptide reads, in one-letter code: DNA replication and repair protein RecF (378 aa).

30–37 (GRNGQGKT) provides a ligand contact to ATP.

The protein belongs to the RecF family.

The protein resides in the cytoplasm. In terms of biological role, the RecF protein is involved in DNA metabolism; it is required for DNA replication and normal SOS inducibility. RecF binds preferentially to single-stranded, linear DNA. It also seems to bind ATP. This Frankia alni (strain DSM 45986 / CECT 9034 / ACN14a) protein is DNA replication and repair protein RecF.